Consider the following 689-residue polypeptide: E3 ubiquitin-protein ligase RNF43 (689 aa).

The signal sequence occupies residues 1–27 (MNRARLQLASLWLLLTVTLQAVASAMG). Over 28–191 (TTEREMDVKA…VQEQPKWLHH (164 aa)) the chain is Extracellular. 2 N-linked (GlcNAc...) asparagine glycosylation sites follow: Asn56 and Asn86. Residues Cys85 and Cys113 are joined by a disulfide bond. Residues 192-212 (DIWILLTVAGTVMFFVLYAVA) form a helical membrane-spanning segment. At 213-689 (RLLCRQPPPQ…EIEAVCEHAV (477 aa)) the chain is on the cytoplasmic side. The RING-type; atypical zinc-finger motif lies at 268-308 (CAICLEEFTDGQELRILPCCHEYHLGCVDPWLRQNHTCPLC). Disordered stretches follow at residues 386–430 (QMRT…HGSS), 445–467 (TSSSSVHSSQSNQEDSSPPALAS), and 492–639 (VHFH…MSES). Composition is skewed to low complexity over residues 408–430 (DSSGYLPDDPGSDSSSGPCHGSS) and 446–461 (SSSSVHSSQSNQEDSS). 2 stretches are compositionally biased toward basic residues: residues 492–504 (VHFHQHRHHHYRR) and 512–523 (SHPHRSKRRTKV). Residues 574 to 588 (QQSMPQAASVVQGSS) are compositionally biased toward polar residues.

This sequence belongs to the ZNRF3 family.

It localises to the cell membrane. Its subcellular location is the endoplasmic reticulum membrane. The protein localises to the nucleus envelope. It catalyses the reaction S-ubiquitinyl-[E2 ubiquitin-conjugating enzyme]-L-cysteine + [acceptor protein]-L-lysine = [E2 ubiquitin-conjugating enzyme]-L-cysteine + N(6)-ubiquitinyl-[acceptor protein]-L-lysine.. The protein operates within protein modification; protein ubiquitination. E3 ubiquitin-protein ligase that acts as a negative regulator of the Wnt signaling pathway by mediating the ubiquitination, endocytosis and subsequent degradation of Wnt receptor complex components Frizzled. Acts on both canonical and non-canonical Wnt signaling pathway. Along with RSPO2 and ZNRF3, constitutes a master switch that governs limb specification. This is E3 ubiquitin-protein ligase RNF43 (rnf43) from Xenopus tropicalis (Western clawed frog).